We begin with the raw amino-acid sequence, 674 residues long: F420-dependent formate dehydrogenase 1 subunit alpha (674 aa).

A 4Fe-4S Mo/W bis-MGD-type domain is found at Leu3–Asp59. 4 residues coordinate [4Fe-4S] cluster: Cys10, Cys13, Cys17, and Cys45. Position 132 (Sec132) is a non-standard amino acid, selenocysteine.

Belongs to the prokaryotic molybdopterin-containing oxidoreductase family. As to quaternary structure, dimer of an alpha (FdhA1) and a beta (FdhB1) subunit. It depends on [4Fe-4S] cluster as a cofactor. The cofactor is Mo-bis(molybdopterin guanine dinucleotide). Zn(2+) serves as cofactor.

The enzyme catalyses oxidized coenzyme F420-(gamma-L-Glu)(n) + formate + 2 H(+) = reduced coenzyme F420-(gamma-L-Glu)(n) + CO2. Functionally, catalyzes the oxidation of formate to carbon dioxide, with coenzyme F420 as the electron acceptor. In vitro can also use methyl viologen as electron acceptor. The protein is F420-dependent formate dehydrogenase 1 subunit alpha of Methanococcus maripaludis (strain DSM 14266 / JCM 13030 / NBRC 101832 / S2 / LL).